Reading from the N-terminus, the 92-residue chain is Small ribosomal subunit protein uS19 (92 aa).

The protein belongs to the universal ribosomal protein uS19 family.

In terms of biological role, protein S19 forms a complex with S13 that binds strongly to the 16S ribosomal RNA. This chain is Small ribosomal subunit protein uS19, found in Baumannia cicadellinicola subsp. Homalodisca coagulata.